Here is a 412-residue protein sequence, read N- to C-terminus: 3,4-dihydroxybenzoate--[aryl-carrier protein] ligase (412 aa).

It belongs to the ATP-dependent AMP-binding enzyme family.

The enzyme catalyses holo-[aryl-carrier protein] + 3,4-dihydroxybenzoate + ATP = 3,4-dihydroxybenzoyl-[aryl-carrier protein] + AMP + diphosphate. It catalyses the reaction 3,4-dihydroxybenzoate + ATP + H(+) = 3,4-dihydroxybenzoyl-5'-AMP + diphosphate. It carries out the reaction 3,4-dihydroxybenzoyl-5'-AMP + holo-[aryl-carrier protein] = 3,4-dihydroxybenzoyl-[aryl-carrier protein] + AMP + H(+). It participates in siderophore biosynthesis; petrobactin biosynthesis. Its activity is regulated as follows. ATP-pyrophosphate exchange is inhibited in vitro by nonhydrolyzable acylsulfamate analogs that mimic the AsbC-bound intermediate 3,4-dihydroxybenzoyl-AMP. Involved in the biosynthesis of petrobactin, a catecholate siderophore that functions in both iron acquisition and virulence. Catalyzes the adenylation of 3,4-dihydroxybenzoate (3,4-DHBA) to the corresponding AMP ester, followed by the transfer of the activated unit to the phosphopantetheine thiol of the aryl-carrier protein AsbD. The chain is 3,4-dihydroxybenzoate--[aryl-carrier protein] ligase from Bacillus anthracis.